We begin with the raw amino-acid sequence, 218 residues long: Octanoyltransferase (218 aa).

Residues 32 to 211 (INTYDEIWFL…KLSQLLNVSI (180 aa)) form the BPL/LPL catalytic domain. Substrate is bound by residues 75 to 82 (RGGQITYH), 142 to 144 (SLG), and 155 to 157 (GLS). Cysteine 173 serves as the catalytic Acyl-thioester intermediate.

It belongs to the LipB family.

The protein resides in the cytoplasm. The catalysed reaction is octanoyl-[ACP] + L-lysyl-[protein] = N(6)-octanoyl-L-lysyl-[protein] + holo-[ACP] + H(+). It participates in protein modification; protein lipoylation via endogenous pathway; protein N(6)-(lipoyl)lysine from octanoyl-[acyl-carrier-protein]: step 1/2. Catalyzes the transfer of endogenously produced octanoic acid from octanoyl-acyl-carrier-protein onto the lipoyl domains of lipoate-dependent enzymes. Lipoyl-ACP can also act as a substrate although octanoyl-ACP is likely to be the physiological substrate. This Buchnera aphidicola subsp. Schizaphis graminum (strain Sg) protein is Octanoyltransferase.